Here is a 1015-residue protein sequence, read N- to C-terminus: Frequency clock protein (1015 aa).

Disordered stretches follow at residues 1 to 138 (MQPT…SADD), 183 to 285 (KRKK…QKVD), 352 to 383 (DFSPQQQQQQQQQQQQQPKSNFITNPGATFSS), 402 to 465 (HVAG…DPDR), 544 to 614 (GRKI…VSAS), 629 to 668 (SPNEQSSMEDGTLSSFGPIEESNADSRWGQSGSGASNRRK), 706 to 728 (ERPDAQGQFARPLPFRSGSGSSI), and 895 to 1015 (SEDD…SSQG). Over residues 49-68 (SAPPNDSNENSSSPRRASSG) the composition is skewed to low complexity. Positions 69-80 (ESHETGQSDAKK) are enriched in basic and acidic residues. Positions 82–95 (FNQSNQNPTATFDS) are enriched in polar residues. Positions 107-117 (KESDSSNEDKP) are enriched in basic and acidic residues. Composition is skewed to low complexity over residues 203 to 216 (SPNTSSSKRNSTTK), 228 to 267 (SGSGSKSQSKHASSSSGSHTRPVDSAYASMSTGAGSSGTS), and 356 to 368 (QQQQQQQQQQQQQ). Over residues 369 to 383 (PKSNFITNPGATFSS) the composition is skewed to polar residues. Over residues 431–442 (NSSSNGNDSGTN) the composition is skewed to low complexity. Positions 443 to 453 (PSPPMPPPPEQ) are enriched in pro residues. Residues 454–465 (RPTRPRDLDPDR) show a composition bias toward basic and acidic residues. Residues 556–570 (TKFSSESSGDLSQRS) show a composition bias toward polar residues. The Nuclear localization signal signature appears at 584 to 588 (HKRQK). Residues 590–600 (GHSTGDSGSSG) are compositionally biased toward low complexity. Positions 629 to 643 (SPNEQSSMEDGTLSS) are enriched in polar residues. 2 stretches are compositionally biased toward acidic residues: residues 895-909 (SEDDFGSDGDDEFNS) and 934-946 (SGDEDGEEPEDDI). Over residues 976–1003 (GSSRGRSNSASAEAVLRAGGSSAATAGG) the composition is skewed to low complexity.

This sequence belongs to the FRQ family.

Its subcellular location is the nucleus. Its function is as follows. Circadian clock component involved in the generation of biological rhythms, in particular in rhythm stability, period length, and temperature compensation. Behaves as a negative element in circadian transcriptional loop. This is Frequency clock protein (FRQ) from Trichoderma spinulosum (Hypocrea spinulosa).